The chain runs to 89 residues: Small ribosomal subunit protein uS15 (89 aa).

It belongs to the universal ribosomal protein uS15 family. In terms of assembly, part of the 30S ribosomal subunit. Forms a bridge to the 50S subunit in the 70S ribosome, contacting the 23S rRNA.

One of the primary rRNA binding proteins, it binds directly to 16S rRNA where it helps nucleate assembly of the platform of the 30S subunit by binding and bridging several RNA helices of the 16S rRNA. Functionally, forms an intersubunit bridge (bridge B4) with the 23S rRNA of the 50S subunit in the ribosome. The protein is Small ribosomal subunit protein uS15 of Exiguobacterium sp. (strain ATCC BAA-1283 / AT1b).